Reading from the N-terminus, the 149-residue chain is Transcription antitermination protein NusB (149 aa).

This sequence belongs to the NusB family.

Involved in transcription antitermination. Required for transcription of ribosomal RNA (rRNA) genes. Binds specifically to the boxA antiterminator sequence of the ribosomal RNA (rrn) operons. The sequence is that of Transcription antitermination protein NusB from Sphingopyxis alaskensis (strain DSM 13593 / LMG 18877 / RB2256) (Sphingomonas alaskensis).